The following is a 112-amino-acid chain: uncharacterized protein (112 aa).

Transmembrane regions (helical) follow at residues proline 7–tyrosine 26 and threonine 36–tyrosine 58.

The protein resides in the membrane. This is an uncharacterized protein from Saccharomyces cerevisiae (strain ATCC 204508 / S288c) (Baker's yeast).